We begin with the raw amino-acid sequence, 360 residues long: MTIKISIDCMGGDHGPSVTIPAAISFVESEPDAELILVGLEETLLAELKKHKASEHPRLSIVNATEVVTMDDPLEIALRRKKDSSMRVAINLVKQGNADACVSAGNTGALMAISRYVLKTLPGVNRPAICSILPNQKDGPTYMLDLGANVDCEPQHLHQFALMGSALVSAMEGNPRPTVGLLNVGEEDIKGNEVVKQTAVLLRADHELGRLNFYGNVEGNDIFKGTTDIVVCDGFVGNVTLKASEGLGRFVKSVLTTEFKSSPLNMLGALIARGALKAISQRMNPSRYNGGSLLGLRGLVFKSHGGADAYGYQWAIKRAFDAAKYDVLTRISTKIADLMPQSAATPEDSAGAIPNATIEP.

Belongs to the PlsX family. As to quaternary structure, homodimer. Probably interacts with PlsY.

The protein resides in the cytoplasm. It catalyses the reaction a fatty acyl-[ACP] + phosphate = an acyl phosphate + holo-[ACP]. Its pathway is lipid metabolism; phospholipid metabolism. Catalyzes the reversible formation of acyl-phosphate (acyl-PO(4)) from acyl-[acyl-carrier-protein] (acyl-ACP). This enzyme utilizes acyl-ACP as fatty acyl donor, but not acyl-CoA. This is Phosphate acyltransferase from Janthinobacterium sp. (strain Marseille) (Minibacterium massiliensis).